Here is a 113-residue protein sequence, read N- to C-terminus: U11-theraphotoxin-Hhn1a (113 aa).

Residues 1 to 21 form the signal peptide; the sequence is MNTVRVTFLLVFVLPVSLGQA. A propeptide spanning residues 22–74 is cleaved from the precursor; sequence DKDENRMEMQEKTEQGKSYLDFAENLLLQKLEELEAKLLEEDSEESRNSRQKR. The span at 60–69 shows a compositional bias: basic and acidic residues; sequence LEEDSEESRN. Residues 60–83 are disordered; it reads LEEDSEESRNSRQKRCIGEGVPCD. Disulfide bonds link Cys75/Cys90, Cys82/Cys95, and Cys89/Cys110.

Belongs to the neurotoxin 14 (magi-1) family. 01 (HNTX-16) subfamily. Expressed by the venom gland.

It localises to the secreted. Its function is as follows. Probable ion channel inhibitor. This Cyriopagopus hainanus (Chinese bird spider) protein is U11-theraphotoxin-Hhn1a.